The sequence spans 398 residues: 1-deoxy-D-xylulose 5-phosphate reductoisomerase (398 aa).

Residues Thr-10, Gly-11, Ser-12, Ile-13, Asn-38, and Asn-124 each contribute to the NADPH site. Lys-125 contributes to the 1-deoxy-D-xylulose 5-phosphate binding site. Glu-126 provides a ligand contact to NADPH. Residue Asp-150 coordinates Mn(2+). Positions 151, 152, 176, and 199 each coordinate 1-deoxy-D-xylulose 5-phosphate. Glu-152 contributes to the Mn(2+) binding site. An NADPH-binding site is contributed by Gly-205. The 1-deoxy-D-xylulose 5-phosphate site is built by Ser-212, Asn-217, Lys-218, and Glu-221. Residue Glu-221 participates in Mn(2+) binding.

It belongs to the DXR family. Requires Mg(2+) as cofactor. The cofactor is Mn(2+).

The enzyme catalyses 2-C-methyl-D-erythritol 4-phosphate + NADP(+) = 1-deoxy-D-xylulose 5-phosphate + NADPH + H(+). The protein operates within isoprenoid biosynthesis; isopentenyl diphosphate biosynthesis via DXP pathway; isopentenyl diphosphate from 1-deoxy-D-xylulose 5-phosphate: step 1/6. Its function is as follows. Catalyzes the NADPH-dependent rearrangement and reduction of 1-deoxy-D-xylulose-5-phosphate (DXP) to 2-C-methyl-D-erythritol 4-phosphate (MEP). This chain is 1-deoxy-D-xylulose 5-phosphate reductoisomerase, found in Rippkaea orientalis (strain PCC 8801 / RF-1) (Cyanothece sp. (strain PCC 8801)).